Consider the following 138-residue polypeptide: Probable non-specific lipid-transfer protein 1 (138 aa).

Positions 1–36 are cleaved as a signal peptide; sequence MRTVSARSSVALVVIVAAVLVWTSSASVAPAPAPGS. Intrachain disulfides connect Cys-40-Cys-88, Cys-50-Cys-65, Cys-66-Cys-111, and Cys-86-Cys-127.

It belongs to the plant LTP family.

Functionally, plant non-specific lipid-transfer proteins transfer phospholipids as well as galactolipids across membranes. May play a role in wax or cutin deposition in the cell walls of expanding epidermal cells and certain secretory tissues. The polypeptide is Probable non-specific lipid-transfer protein 1 (Parietaria judaica (Pellitory-of-the-wall)).